The primary structure comprises 141 residues: Large ribosomal subunit protein uL11 (141 aa).

Belongs to the universal ribosomal protein uL11 family. Part of the ribosomal stalk of the 50S ribosomal subunit. Interacts with L10 and the large rRNA to form the base of the stalk. L10 forms an elongated spine to which L12 dimers bind in a sequential fashion forming a multimeric L10(L12)X complex. Post-translationally, one or more lysine residues are methylated.

In terms of biological role, forms part of the ribosomal stalk which helps the ribosome interact with GTP-bound translation factors. The chain is Large ribosomal subunit protein uL11 from Synechococcus sp. (strain CC9902).